The chain runs to 261 residues: Cytochrome c oxidase subunit 2 (261 aa).

Topologically, residues methionine 1–glutamine 34 are mitochondrial intermembrane. A helical transmembrane segment spans residues glycine 35–serine 55. The Mitochondrial matrix segment spans residues arginine 56–threonine 87. The chain crosses the membrane as a helical span at residues isoleucine 88 to methionine 108. Residues aspartate 109 to alanine 261 lie on the Mitochondrial intermembrane side of the membrane. The Cu cation site is built by histidine 188, cysteine 223, glutamate 225, cysteine 227, and histidine 231. Residue glutamate 225 participates in Mg(2+) binding.

Belongs to the cytochrome c oxidase subunit 2 family. Component of the cytochrome c oxidase (complex IV, CIV), a multisubunit enzyme composed of a catalytic core of 3 subunits and several supernumerary subunits. The complex exists as a monomer or a dimer and forms supercomplexes (SCs) in the inner mitochondrial membrane with ubiquinol-cytochrome c oxidoreductase (cytochrome b-c1 complex, complex III, CIII). Cu cation is required as a cofactor.

The protein localises to the mitochondrion inner membrane. It catalyses the reaction 4 Fe(II)-[cytochrome c] + O2 + 8 H(+)(in) = 4 Fe(III)-[cytochrome c] + 2 H2O + 4 H(+)(out). In terms of biological role, component of the cytochrome c oxidase, the last enzyme in the mitochondrial electron transport chain which drives oxidative phosphorylation. The respiratory chain contains 3 multisubunit complexes succinate dehydrogenase (complex II, CII), ubiquinol-cytochrome c oxidoreductase (cytochrome b-c1 complex, complex III, CIII) and cytochrome c oxidase (complex IV, CIV), that cooperate to transfer electrons derived from NADH and succinate to molecular oxygen, creating an electrochemical gradient over the inner membrane that drives transmembrane transport and the ATP synthase. Cytochrome c oxidase is the component of the respiratory chain that catalyzes the reduction of oxygen to water. Electrons originating from reduced cytochrome c in the intermembrane space (IMS) are transferred via the dinuclear copper A center (CU(A)) of subunit 2 and heme A of subunit 1 to the active site in subunit 1, a binuclear center (BNC) formed by heme A3 and copper B (CU(B)). The BNC reduces molecular oxygen to 2 water molecules using 4 electrons from cytochrome c in the IMS and 4 protons from the mitochondrial matrix. In Daucus carota (Wild carrot), this protein is Cytochrome c oxidase subunit 2 (COX2).